We begin with the raw amino-acid sequence, 339 residues long: Ectoine/5-hydroxyectoine-binding periplasmic protein UehA (339 aa).

Positions Met-1 to Ala-20 are cleaved as a signal peptide. Glu-36, Arg-171, Asn-211, Phe-215, and Phe-236 together coordinate L-ectoine. Cys-162 and Cys-303 are joined by a disulfide.

This sequence belongs to the bacterial solute-binding protein 7 family. As to quaternary structure, monomer. The complex comprises the extracytoplasmic solute receptor protein UehA, and the two transmembrane proteins UehB and UehC.

It localises to the periplasm. In terms of biological role, part of the tripartite ATP-independent periplasmic (TRAP) transport system UehABC, which imports both ectoine and 5-hydroxyectoine as nutrients, and not as osmoprotectants. UehA binds both ectoine and 5-hydroxyectoine with high specificity and affinity. The polypeptide is Ectoine/5-hydroxyectoine-binding periplasmic protein UehA (Ruegeria pomeroyi (strain ATCC 700808 / DSM 15171 / DSS-3) (Silicibacter pomeroyi)).